The primary structure comprises 858 residues: Leucine--tRNA ligase (858 aa).

Positions 42–52 (PYPSGRLHMGH) match the 'HIGH' region motif. The short motif at 618–622 (KMSKS) is the 'KMSKS' region element. Lys-621 provides a ligand contact to ATP.

The protein belongs to the class-I aminoacyl-tRNA synthetase family.

The protein localises to the cytoplasm. It catalyses the reaction tRNA(Leu) + L-leucine + ATP = L-leucyl-tRNA(Leu) + AMP + diphosphate. The chain is Leucine--tRNA ligase from Photobacterium profundum (strain SS9).